The primary structure comprises 461 residues: Ribitol-5-phosphate transferase FKTN (461 aa).

Residues 1 to 7 (MSRINKN) lie on the Cytoplasmic side of the membrane. Residues 6–27 (KNVVLALLTLTSSAFLLFQLYY) are required and sufficient for interaction with POMGNT1. A helical; Signal-anchor for type II membrane protein membrane pass occupies residues 8 to 28 (VVLALLTLTSSAFLLFQLYYY). Over 29–461 (KHYLSTKNGA…SEWDEVIQLY (433 aa)) the chain is Lumenal. Residue asparagine 92 is glycosylated (N-linked (GlcNAc...) asparagine).

This sequence belongs to the LicD transferase family. In terms of assembly, forms a complex composed of FKTN/fukutin, FKRP and RXYLT1/TMEM5. Interacts (via transmembrane domain) with POMGNT1; the interaction is direct and is required for normal POMGNT1 location in Golgi membranes. In terms of tissue distribution, expressed in the retina (at protein level). Widely expressed with highest expression in brain, heart, pancreas and skeletal muscle. Expressed at similar levels in control fetal and adult brain. Expressed in migrating neurons, including Cajar-Retzius cells and adult cortical neurons, as well as hippocampal pyramidal cells and cerebellar Purkinje cells. No expression observed in the glia limitans, the subpial astrocytes (which contribute to basement membrane formation) or other glial cells.

It is found in the golgi apparatus membrane. The protein resides in the cytoplasm. The protein localises to the nucleus. The enzyme catalyses 3-O-[beta-D-GalNAc-(1-&gt;3)-beta-D-GlcNAc-(1-&gt;4)-(O-6-P-alpha-D-Man)]-Thr-[protein] + CDP-L-ribitol = 3-O-[Rib-ol-P-3-beta-D-GalNAc-(1-&gt;3)-beta-D-GlcNAc-(1-&gt;4)-(O-6-P-alpha-D-Man)]-Thr-[protein] + CMP + H(+). It functions in the pathway protein modification; protein glycosylation. Catalyzes the transfer of a ribitol-phosphate from CDP-ribitol to the distal N-acetylgalactosamine of the phosphorylated O-mannosyl trisaccharide (N-acetylgalactosamine-beta-3-N-acetylglucosamine-beta-4-(phosphate-6-)mannose), a carbohydrate structure present in alpha-dystroglycan (DAG1). This constitutes the first step in the formation of the ribitol 5-phosphate tandem repeat which links the phosphorylated O-mannosyl trisaccharide to the ligand binding moiety composed of repeats of 3-xylosyl-alpha-1,3-glucuronic acid-beta-1. Required for normal location of POMGNT1 in Golgi membranes, and for normal POMGNT1 activity. May interact with and reinforce a large complex encompassing the outside and inside of muscle membranes. Could be involved in brain development. This chain is Ribitol-5-phosphate transferase FKTN, found in Homo sapiens (Human).